The following is a 137-amino-acid chain: Fluoride-specific ion channel FluC 4 (137 aa).

The next 4 membrane-spanning stretches (helical) occupy residues 20–40 (AAIG…ILGA), 43–63 (LWGT…FATL), 83–103 (GLCG…LLVL), and 110–130 (ALAY…LGLI). Gly-86 and Thr-89 together coordinate Na(+).

It belongs to the fluoride channel Fluc/FEX (TC 1.A.43) family.

It is found in the cell inner membrane. The catalysed reaction is fluoride(in) = fluoride(out). With respect to regulation, na(+) is not transported, but it plays an essential structural role and its presence is essential for fluoride channel function. Its function is as follows. Fluoride-specific ion channel. Important for reducing fluoride concentration in the cell, thus reducing its toxicity. This is Fluoride-specific ion channel FluC 4 from Brucella suis biovar 1 (strain 1330).